The primary structure comprises 499 residues: Bifunctional purine biosynthesis protein PurH (499 aa).

The MGS-like domain occupies 1 to 144 (MIKRALISVF…KNFKDVVVLT (144 aa)).

This sequence belongs to the PurH family.

It catalyses the reaction (6R)-10-formyltetrahydrofolate + 5-amino-1-(5-phospho-beta-D-ribosyl)imidazole-4-carboxamide = 5-formamido-1-(5-phospho-D-ribosyl)imidazole-4-carboxamide + (6S)-5,6,7,8-tetrahydrofolate. The catalysed reaction is IMP + H2O = 5-formamido-1-(5-phospho-D-ribosyl)imidazole-4-carboxamide. It functions in the pathway purine metabolism; IMP biosynthesis via de novo pathway; 5-formamido-1-(5-phospho-D-ribosyl)imidazole-4-carboxamide from 5-amino-1-(5-phospho-D-ribosyl)imidazole-4-carboxamide (10-formyl THF route): step 1/1. The protein operates within purine metabolism; IMP biosynthesis via de novo pathway; IMP from 5-formamido-1-(5-phospho-D-ribosyl)imidazole-4-carboxamide: step 1/1. The protein is Bifunctional purine biosynthesis protein PurH of Clostridium botulinum (strain Langeland / NCTC 10281 / Type F).